The following is a 106-amino-acid chain: Large ribosomal subunit protein uL24 (106 aa).

Belongs to the universal ribosomal protein uL24 family. As to quaternary structure, part of the 50S ribosomal subunit.

In terms of biological role, one of two assembly initiator proteins, it binds directly to the 5'-end of the 23S rRNA, where it nucleates assembly of the 50S subunit. Functionally, one of the proteins that surrounds the polypeptide exit tunnel on the outside of the subunit. This chain is Large ribosomal subunit protein uL24, found in Clostridium acetobutylicum (strain ATCC 824 / DSM 792 / JCM 1419 / IAM 19013 / LMG 5710 / NBRC 13948 / NRRL B-527 / VKM B-1787 / 2291 / W).